The chain runs to 323 residues: Phosphatidylethanolamine:ceramide ethanolaminephosphotransferase (323 aa).

At Met1–Gln26 the chain is on the cytoplasmic side. The chain crosses the membrane as a helical span at residues Val27–Ile47. Over Thr48–Gly74 the chain is Extracellular. Residues Met75–Phe95 form a helical membrane-spanning segment. At Lys96 to Arg147 the chain is on the cytoplasmic side. Residues Phe148 to Leu168 traverse the membrane as a helical segment. The Extracellular segment spans residues Pro169–Asp187. A helical transmembrane segment spans residues Ile188–Ser208. Over Gly209–Arg233 the chain is Cytoplasmic. The chain crosses the membrane as a helical span at residues Pro234–Tyr254. Over Thr255–Asp257 the chain is Extracellular. A helical transmembrane segment spans residues Val258 to Gly278. The Cytoplasmic portion of the chain corresponds to Ala279 to Ser323.

Belongs to the sphingomyelin synthase family.

The protein localises to the membrane. The catalysed reaction is an N-acylsphing-4-enine + a 1,2-diacyl-sn-glycero-3-phosphoethanolamine = an N-acylsphing-4-enine 1-phosphoethanolamine + a 1,2-diacyl-sn-glycerol. It catalyses the reaction an N-acylsphinganine + a 1,2-diacyl-sn-glycero-3-phosphoethanolamine = an N-acylsphinganine-1-phosphoethanolamine + a 1,2-diacyl-sn-glycerol. Its function is as follows. Predominantly synthesizes ethanolamine-phosphorylceramide (EPC), with minimal sphingomyelin (SM)/inositol phosphorylceramide (IPC) synthase activity. Specificity is likely to be defined by residues in the lumenal catalytic domain that interact with the polar head groups of the phospholipid donors. EPC is synthesized by both stages of the parasite life cycle, bloodstream forms (BSF) and procyclic forms (PCF), by transferring the phosphoethanolamine from a 1,2-diacyl-sn-glycero-3-phosphoethanolamine to an N-acylsphing-4-enine (ceramide) or an N-acylsphinganine (dihydroceramide). Similarly, SM is synthesized by transferring the phosphocholine from a 1,2-diacyl-sn-glycero-3-phosphocholine to ceramide or dihydroceramide by BSF and PCF, while IPC is confined to PCF. The ceramide/dihydroceramide ratios are skewed towards dihydroceramide in PCF parasites and ceramide in BSF parasites, this is likely due to differential expression and/or regulation of dihydroceramide desaturase, the enzyme responsible for converting dihydroceramide to ceramide. The polypeptide is Phosphatidylethanolamine:ceramide ethanolaminephosphotransferase (Trypanosoma brucei brucei).